The following is a 439-amino-acid chain: UPF0489 protein C5orf22 homolog (439 aa).

Positions 163 to 219 (TTKLENGQSGAKIPKAAQTQDDMQSKADTPCTSSSQPPDGSAASGNISETAKKKADD) are disordered. Over residues 179–211 (AQTQDDMQSKADTPCTSSSQPPDGSAASGNISE) the composition is skewed to polar residues.

Belongs to the UPF0489 family.

This is UPF0489 protein C5orf22 homolog from Danio rerio (Zebrafish).